A 1449-amino-acid chain; its full sequence is VWFA and cache domain-containing protein CG16868 (1449 aa).

The first 23 residues, 1–23, serve as a signal peptide directing secretion; the sequence is MWPNSNLNAVLLILAVLACPTSS. Over 24–1220 the chain is Extracellular; the sequence is QHVPLAMANS…NPQREQHAYS (1197 aa). Asn-32, Asn-112, Asn-153, Asn-407, Asn-447, and Asn-497 each carry an N-linked (GlcNAc...) asparagine glycan. The 222-residue stretch at 320–541 folds into the VWFA domain; that stretch reads FVLFLIDVGS…TSLPQTSSRI (222 aa). The region spanning 557–639 is the Cache 1 domain; sequence VHPPVVDADS…PRPLIQRETS (83 aa). Residues Asn-649, Asn-668, and Asn-707 are each glycosylated (N-linked (GlcNAc...) asparagine). Positions 889 to 934 constitute a Cache 2 domain; that stretch reads TAPYLDAGGAGYIITIAHTIFEGKAHALHSAQQDRPVAVVALDVPY. N-linked (GlcNAc...) asparagine glycosylation is found at Asn-1015, Asn-1025, Asn-1059, and Asn-1111. Residues 1221-1241 form a helical membrane-spanning segment; that stretch reads AFGPLGGAIVVLVMVIGFAIY. Over 1242 to 1449 the chain is Cytoplasmic; it reads CYRHNLDAQT…VHRHMETAES (208 aa). Disordered stretches follow at residues 1307 to 1339 and 1352 to 1416; these read YHVS…SSDQ and DKRH…GGSV. A compositionally biased stretch (low complexity) spans 1359–1369; that stretch reads DTMSISTSISS. Positions 1370–1392 are enriched in polar residues; it reads PTNRQQSSSQPNTHPYLSNQPTS.

The protein belongs to the calcium channel subunit alpha-2/delta family.

The protein resides in the membrane. In Drosophila melanogaster (Fruit fly), this protein is VWFA and cache domain-containing protein CG16868.